The sequence spans 194 residues: Small ribosomal subunit protein uS7 (194 aa).

Belongs to the universal ribosomal protein uS7 family. As to quaternary structure, part of the 30S ribosomal subunit.

In terms of biological role, one of the primary rRNA binding proteins, it binds directly to 16S rRNA where it nucleates assembly of the head domain of the 30S subunit. Is located at the subunit interface close to the decoding center. The protein is Small ribosomal subunit protein uS7 of Methanocorpusculum labreanum (strain ATCC 43576 / DSM 4855 / Z).